A 273-amino-acid chain; its full sequence is MSMFTSTRTLTQTMDKPDDLTRSATETAVKLSNMNQRVSRFHDKMENEIEVRRVDDDTRVKMIKDAIAHLDRLIQTESRKRQASFEDIREEVKKSADNMYLTIKEEIDTMAANFRKSLAEMGDTLNNVETNLQNQIAIHNDAIAALRKEALKSLNDLETGIATENAERKKMYDQLNEKVAEGFARISAAIEKETIARERAVSAATTEALTNTKLVEKCVNEQLENVASEIRAIQEEIDREKAERKEAEDKIVNTLEDVVSKIQGGLSMVTKHQ.

A nonhelical region region spans residues 1 to 19 (MSMFTSTRTLTQTMDKPDD). A rod region spans residues 20-273 (LTRSATETAV…GGLSMVTKHQ (254 aa)). 2 coiled-coil regions span residues 123 to 175 (DTLN…YDQL) and 211 to 263 (NTKL…SKIQ).

The protein belongs to the SF-assemblin family. Interacts with BOP1 (via C-terminal WD repeats).

The protein localises to the cytoplasm. It is found in the cytoskeleton. In terms of biological role, giardins are involved in parasite attachment to the intestinal mucosa and in the cytoskeletal disassembly and reassembly that marks the transition from infectious trophozoite to transmissible cyst. They may interact with other cytoskeletal proteins such as microtubules in the microribbons or crossbridges, to maintain the integrity of the ventral disk. The chain is Giardin subunit beta from Giardia intestinalis (Giardia lamblia).